A 246-amino-acid polypeptide reads, in one-letter code: Eukaryotic translation initiation factor 6 (246 aa).

Phosphoserine; by CK1 occurs at positions 174 and 175.

It belongs to the eIF-6 family. In terms of assembly, monomer. Associates with the 60S ribosomal subunit. Post-translationally, phosphorylation at Ser-174 and Ser-175 promotes nuclear export.

The protein localises to the cytoplasm. The protein resides in the nucleus. It is found in the nucleolus. Binds to the 60S ribosomal subunit and prevents its association with the 40S ribosomal subunit to form the 80S initiation complex in the cytoplasm. Is also involved in ribosome biogenesis. Associates with pre-60S subunits in the nucleus and is involved in its nuclear export. This is Eukaryotic translation initiation factor 6 from Verticillium alfalfae (strain VaMs.102 / ATCC MYA-4576 / FGSC 10136) (Verticillium wilt of alfalfa).